Reading from the N-terminus, the 160-residue chain is 2-C-methyl-D-erythritol 2,4-cyclodiphosphate synthase (160 aa).

Residues Asp11 and His13 each contribute to the a divalent metal cation site. Residues 11-13 and 37-38 contribute to the 4-CDP-2-C-methyl-D-erythritol 2-phosphate site; these read DIH and HS. Position 45 (His45) interacts with a divalent metal cation. 4-CDP-2-C-methyl-D-erythritol 2-phosphate is bound by residues 59–61, 135–138, and Arg145; these read DIG and TTNE.

The protein belongs to the IspF family. As to quaternary structure, homotrimer. The cofactor is a divalent metal cation.

The catalysed reaction is 4-CDP-2-C-methyl-D-erythritol 2-phosphate = 2-C-methyl-D-erythritol 2,4-cyclic diphosphate + CMP. It participates in isoprenoid biosynthesis; isopentenyl diphosphate biosynthesis via DXP pathway; isopentenyl diphosphate from 1-deoxy-D-xylulose 5-phosphate: step 4/6. Functionally, involved in the biosynthesis of isopentenyl diphosphate (IPP) and dimethylallyl diphosphate (DMAPP), two major building blocks of isoprenoid compounds. Catalyzes the conversion of 4-diphosphocytidyl-2-C-methyl-D-erythritol 2-phosphate (CDP-ME2P) to 2-C-methyl-D-erythritol 2,4-cyclodiphosphate (ME-CPP) with a corresponding release of cytidine 5-monophosphate (CMP). This chain is 2-C-methyl-D-erythritol 2,4-cyclodiphosphate synthase, found in Nostoc punctiforme (strain ATCC 29133 / PCC 73102).